Reading from the N-terminus, the 353-residue chain is Abasic site processing protein HMCES (353 aa).

Catalysis depends on cysteine 2, which acts as the Nucleophile. Residue cysteine 2 is modified to Thiazolidine linkage to a ring-opened DNA abasic site. Glutamate 127 is an active-site residue. Residues lysine 148 and lysine 151 each participate in a glycyl lysine isopeptide (Lys-Gly) (interchain with G-Cter in SUMO2) cross-link. A Phosphoserine modification is found at serine 160. Residues lysine 274 and lysine 275 each participate in a glycyl lysine isopeptide (Lys-Gly) (interchain with G-Cter in SUMO2) cross-link. The disordered stretch occupies residues 292–353 (TKSPKKEVPD…DEPMAKKPNS (62 aa)). Phosphoserine is present on serine 294. Over residues 295–307 (PKKEVPDSPKKDA) the composition is skewed to basic and acidic residues. Lysine 305 is covalently cross-linked (Glycyl lysine isopeptide (Lys-Gly) (interchain with G-Cter in SUMO2)). The residue at position 321 (serine 321) is a Phosphoserine. Positions 332-338 (SFLDRWL) match the PIP-box motif. A compositionally biased stretch (basic and acidic residues) spans 336–353 (RWLKQEKEDEPMAKKPNS). Residues lysine 339 and lysine 342 each participate in a glycyl lysine isopeptide (Lys-Gly) (interchain with G-Cter in SUMO2) cross-link.

It belongs to the SOS response-associated peptidase family. In terms of assembly, interacts (via PIP-box motif) with PCNA. Expressed in embryonic stem cells.

It localises to the chromosome. With respect to regulation, formation and reversal of DNA-protein cross-link depends on DNA context. Catalyzes formation of the thiazolidine linkage in presence of abasic sites in single-stranded DNA. Mediates the reversal of the thiazolidine cross-link in presence of double stranded DNA. In terms of biological role, sensor of abasic sites in single-stranded DNA (ssDNA) required to preserve genome integrity by promoting error-free repair of abasic sites. Acts as an enzyme that recognizes and binds abasic sites in ssDNA at replication forks and chemically modifies the lesion by forming a covalent cross-link with DNA: forms a stable thiazolidine linkage between a ring-opened abasic site and the alpha-amino and sulfhydryl substituents of its N-terminal catalytic cysteine residue. Promotes error-free repair by protecting abasic sites from translesion synthesis (TLS) polymerases and endonucleases that are error-prone and would generate mutations and double-strand breaks. The HMCES DNA-protein cross-link is then either reversed or degraded. HMCES is able to catalyze the reversal of its thiazolidine cross-link and cycle between a cross-link and a non-cross-linked state depending on DNA context: mediates self-reversal of the thiazolidine cross-link in double stranded DNA, allowing APEX1 to initiate downstream repair of abasic sites. The HMCES DNA-protein cross-link can also be degraded by the SPRTN metalloprotease following unfolding by the BRIP1/FANCJ helicase. Has preference for ssDNA, but can also accommodate double-stranded DNA with 3' or 5' overhang (dsDNA), and dsDNA-ssDNA 3' junction. Plays a protective role during somatic hypermutation of immunoglobulin genes in B-cells: acts via its ability to form covalent cross-links with abasic sites, thereby limiting the accumulation of deletions in somatic hypermutation target regions. Also involved in class switch recombination (CSR) in B-cells independently of the formation of a DNA-protein cross-link: acts by binding and protecting ssDNA overhangs to promote DNA double-strand break repair through the microhomology-mediated alternative-end-joining (Alt-EJ) pathway. Acts as a protease: mediates autocatalytic processing of its N-terminal methionine in order to expose the catalytic cysteine. This is Abasic site processing protein HMCES from Mus musculus (Mouse).